We begin with the raw amino-acid sequence, 386 residues long: Heat-inducible transcription repressor HrcA (386 aa).

Belongs to the HrcA family.

Its function is as follows. Negative regulator of class I heat shock genes (grpE-dnaK-dnaJ and groELS operons). Prevents heat-shock induction of these operons. This is Heat-inducible transcription repressor HrcA from Chlamydia abortus (strain DSM 27085 / S26/3) (Chlamydophila abortus).